The sequence spans 208 residues: Octanoyltransferase (208 aa).

Positions 30 to 208 (GTASEAVFIL…ILKQEFYKIF (179 aa)) constitute a BPL/LPL catalytic domain. Substrate is bound by residues 69-76 (RGGKFTYH), 142-144 (SIG), and 155-157 (GVA). The Acyl-thioester intermediate role is filled by Cys-173.

This sequence belongs to the LipB family.

Its subcellular location is the cytoplasm. The catalysed reaction is octanoyl-[ACP] + L-lysyl-[protein] = N(6)-octanoyl-L-lysyl-[protein] + holo-[ACP] + H(+). The protein operates within protein modification; protein lipoylation via endogenous pathway; protein N(6)-(lipoyl)lysine from octanoyl-[acyl-carrier-protein]: step 1/2. In terms of biological role, catalyzes the transfer of endogenously produced octanoic acid from octanoyl-acyl-carrier-protein onto the lipoyl domains of lipoate-dependent enzymes. Lipoyl-ACP can also act as a substrate although octanoyl-ACP is likely to be the physiological substrate. This chain is Octanoyltransferase, found in Orientia tsutsugamushi (strain Ikeda) (Rickettsia tsutsugamushi).